Consider the following 190-residue polypeptide: Xanthine phosphoribosyltransferase (190 aa).

Positions 20 and 27 each coordinate xanthine. 128–132 (ANGHA) is a binding site for 5-phospho-alpha-D-ribose 1-diphosphate. Lys-156 serves as a coordination point for xanthine.

Belongs to the purine/pyrimidine phosphoribosyltransferase family. Xpt subfamily. In terms of assembly, homodimer.

The protein resides in the cytoplasm. It carries out the reaction XMP + diphosphate = xanthine + 5-phospho-alpha-D-ribose 1-diphosphate. The protein operates within purine metabolism; XMP biosynthesis via salvage pathway; XMP from xanthine: step 1/1. In terms of biological role, converts the preformed base xanthine, a product of nucleic acid breakdown, to xanthosine 5'-monophosphate (XMP), so it can be reused for RNA or DNA synthesis. In Pseudomonas aeruginosa (strain ATCC 15692 / DSM 22644 / CIP 104116 / JCM 14847 / LMG 12228 / 1C / PRS 101 / PAO1), this protein is Xanthine phosphoribosyltransferase.